Here is a 1175-residue protein sequence, read N- to C-terminus: Phospholipid-transporting ATPase IF (1175 aa).

4 helical membrane-spanning segments follow: residues 69-89, 91-111, 287-307, and 338-358; these read FYFL…SPIT, GLPL…EDWL, NTFL…STIL, and FISD…ISLY. Catalysis depends on aspartate 407, which acts as the 4-aspartylphosphate intermediate. Residues aspartate 407, lysine 408, threonine 409, glutamate 530, phenylalanine 571, lysine 594, arginine 625, threonine 705, glycine 706, aspartate 707, arginine 793, and lysine 799 each coordinate ATP. Aspartate 407 lines the Mg(2+) pocket. Threonine 409 contributes to the Mg(2+) binding site. Aspartate 820 lines the Mg(2+) pocket. The ATP site is built by asparagine 823 and aspartate 824. Mg(2+) is bound at residue aspartate 824. The next 6 membrane-spanning stretches (helical) occupy residues 862–882, 910–930, 963–983, 994–1014, 1033–1053, and 1060–1080; these read LLFV…QYFF, VYLT…YSLV, WTVL…FLVG, MFGN…TVTV, GSII…WPFL, and FVFI…LMVV.

The protein belongs to the cation transport ATPase (P-type) (TC 3.A.3) family. Type IV subfamily. As to quaternary structure, component of a P4-ATPase flippase complex which consists of a catalytic alpha subunit ATP11B and an accessory beta subunit TMEM30A. The cofactor is Mg(2+). Expressed in retina, brain, liver, testes and kidney (at protein level).

The protein resides in the recycling endosome membrane. It localises to the early endosome. It is found in the endoplasmic reticulum. The protein localises to the golgi apparatus. Its subcellular location is the trans-Golgi network. The enzyme catalyses ATP + H2O + phospholipidSide 1 = ADP + phosphate + phospholipidSide 2.. It catalyses the reaction a 1,2-diacyl-sn-glycero-3-phospho-L-serine(out) + ATP + H2O = a 1,2-diacyl-sn-glycero-3-phospho-L-serine(in) + ADP + phosphate + H(+). It carries out the reaction a 1,2-diacyl-sn-glycero-3-phosphoethanolamine(out) + ATP + H2O = a 1,2-diacyl-sn-glycero-3-phosphoethanolamine(in) + ADP + phosphate + H(+). Catalytic component of a P4-ATPase flippase complex which catalyzes the hydrolysis of ATP coupled to the transport of aminophospholipids, phosphatidylserines (PS) and phosphatidylethanolamines (PE), from the outer to the inner leaflet of intracellular membranes. May contribute to the maintenance of membrane lipid asymmetry in endosome compartment. The polypeptide is Phospholipid-transporting ATPase IF (Mus musculus (Mouse)).